Reading from the N-terminus, the 511-residue chain is Maturase K (511 aa).

This sequence belongs to the intron maturase 2 family. MatK subfamily.

The protein localises to the plastid. Its subcellular location is the chloroplast. In terms of biological role, usually encoded in the trnK tRNA gene intron. Probably assists in splicing its own and other chloroplast group II introns. This is Maturase K from Hordeum secalinum (Meadow barley).